A 333-amino-acid polypeptide reads, in one-letter code: Olfactory receptor 9S13 (333 aa).

Topologically, residues 1 to 35 (MATAVHRNGSLTPVSLRVFVLVGFGGGALTQALLF) are extracellular. Asn-8 is a glycosylation site (N-linked (GlcNAc...) asparagine). A helical transmembrane segment spans residues 36–56 (AVFLVLYVVTVLGNLTMIVVI). Topologically, residues 57-72 (TLDARLHSPMYFFLKN) are cytoplasmic. A helical membrane pass occupies residues 73–93 (LSFVDLCYSSAIAPNALANFL). The Extracellular segment spans residues 94–106 (STSKVISFEACAT). Residues Cys-104 and Cys-196 are joined by a disulfide bond. A helical transmembrane segment spans residues 107–127 (QFFFFSLLATTETFLLAVMAY). Residues 128 to 150 (DRFMAICSPLRYPVTMCPTTCTR) are Cytoplasmic-facing. The chain crosses the membrane as a helical span at residues 151–171 (LVLGTFCVGCLNSIVQTSLTF). Over 172 to 203 (QLPFCSSNRIDHFYCDVPPLLQLACASTALNE) the chain is Extracellular. The helical transmembrane segment at 204-224 (LFLFGLCGFIIVSTTLAVLVS) threads the bilayer. Topologically, residues 225–251 (YGYITVTILRMHSGSGRHKVFSTCGSH) are cytoplasmic. Residues 252–272 (LTAVSLFYGTLFVMYAQPGAL) form a helical membrane-spanning segment. Residues 273 to 278 (TSMEQG) are Extracellular-facing. The chain crosses the membrane as a helical span at residues 279–299 (KVVSIFYTLVIPMLNPLIYSL). Over 300-333 (RNKDVKDALQRLGQRHSLVKAVRGCPAAGGNASV) the chain is Cytoplasmic.

The protein belongs to the G-protein coupled receptor 1 family.

The protein resides in the cell membrane. Functionally, odorant receptor. This is Olfactory receptor 9S13 from Mus musculus (Mouse).